The following is a 445-amino-acid chain: Probable D-serine dehydratase (445 aa).

At Lys-111 the chain carries N6-(pyridoxal phosphate)lysine.

This sequence belongs to the serine/threonine dehydratase family. DsdA subfamily. Pyridoxal 5'-phosphate serves as cofactor.

It carries out the reaction D-serine = pyruvate + NH4(+). The polypeptide is Probable D-serine dehydratase (Burkholderia pseudomallei (strain 1106a)).